The sequence spans 283 residues: Elongation factor Ts (283 aa).

Positions 84–87 (TDFV) are involved in Mg(2+) ion dislocation from EF-Tu.

This sequence belongs to the EF-Ts family.

It localises to the cytoplasm. Its function is as follows. Associates with the EF-Tu.GDP complex and induces the exchange of GDP to GTP. It remains bound to the aminoacyl-tRNA.EF-Tu.GTP complex up to the GTP hydrolysis stage on the ribosome. This Bifidobacterium longum subsp. infantis (strain ATCC 15697 / DSM 20088 / JCM 1222 / NCTC 11817 / S12) protein is Elongation factor Ts.